Here is a 245-residue protein sequence, read N- to C-terminus: Probable phosphatase KPN78578_10290 (245 aa).

Zn(2+)-binding residues include His-7, His-9, His-15, His-40, Glu-73, His-101, His-131, Asp-192, and His-194.

The protein belongs to the PHP family. As to quaternary structure, homotrimer. Zn(2+) serves as cofactor.

This is Probable phosphatase KPN78578_10290 from Klebsiella pneumoniae subsp. pneumoniae (strain ATCC 700721 / MGH 78578).